Here is a 619-residue protein sequence, read N- to C-terminus: Long-chain fatty acid transport protein 6 (619 aa).

The next 2 helical transmembrane spans lie at 22 to 42 (LLFP…RYGI) and 119 to 139 (VHVW…NSNL). 221–232 (YIFTSGTTGLPK) provides a ligand contact to AMP.

This sequence belongs to the ATP-dependent AMP-binding enzyme family.

The protein resides in the cell membrane. The protein localises to the sarcolemma. The catalysed reaction is a fatty acid(in) = a fatty acid(out). It carries out the reaction hexadecanoate(out) = hexadecanoate(in). It catalyses the reaction (9Z,12Z)-octadecadienoate(out) = (9Z,12Z)-octadecadienoate(in). The enzyme catalyses (9Z)-octadecenoate(out) = (9Z)-octadecenoate(in). The catalysed reaction is a very long-chain fatty acid + ATP + CoA = a very long-chain fatty acyl-CoA + AMP + diphosphate. It carries out the reaction tetracosanoate + ATP + CoA = tetracosanoyl-CoA + AMP + diphosphate. It catalyses the reaction a long-chain fatty acid + ATP + CoA = a long-chain fatty acyl-CoA + AMP + diphosphate. The enzyme catalyses (9Z)-octadecenoate + ATP + CoA = (9Z)-octadecenoyl-CoA + AMP + diphosphate. The catalysed reaction is (5Z,8Z,11Z,14Z)-eicosatetraenoate + ATP + CoA = (5Z,8Z,11Z,14Z)-eicosatetraenoyl-CoA + AMP + diphosphate. Mediates the import of long-chain fatty acids (LCFA) into the cell by facilitating their transport at the plasma membrane. Also functions as an acyl-CoA ligase catalyzing the ATP-dependent formation of fatty acyl-CoA using LCFA and very-long-chain fatty acids (VLCFA) as substrates. Plays a pivotal role in regulating available LCFA substrates from exogenous sources in tissues undergoing high levels of beta-oxidation such as the heart. This is Long-chain fatty acid transport protein 6 (Slc27a6) from Mus musculus (Mouse).